A 148-amino-acid polypeptide reads, in one-letter code: Single-stranded DNA-binding protein 2 (148 aa).

The SSB domain maps to 6–108 (MNHITVSGLV…IEAESFGHDL (103 aa)).

Homotetramer.

The chain is Single-stranded DNA-binding protein 2 (ssb2) from Tropheryma whipplei (strain TW08/27) (Whipple's bacillus).